A 547-amino-acid polypeptide reads, in one-letter code: Chaperonin GroEL (547 aa).

ATP is bound by residues 30-33, Lys-51, 87-91, Gly-415, 479-481, and Asp-495; these read TLGP, DGTTT, and NAA.

Belongs to the chaperonin (HSP60) family. In terms of assembly, forms a cylinder of 14 subunits composed of two heptameric rings stacked back-to-back. Interacts with the co-chaperonin GroES.

The protein resides in the cytoplasm. It carries out the reaction ATP + H2O + a folded polypeptide = ADP + phosphate + an unfolded polypeptide.. In terms of biological role, together with its co-chaperonin GroES, plays an essential role in assisting protein folding. The GroEL-GroES system forms a nano-cage that allows encapsulation of the non-native substrate proteins and provides a physical environment optimized to promote and accelerate protein folding. The chain is Chaperonin GroEL from Cupriavidus taiwanensis (strain DSM 17343 / BCRC 17206 / CCUG 44338 / CIP 107171 / LMG 19424 / R1) (Ralstonia taiwanensis (strain LMG 19424)).